The chain runs to 121 residues: Large ribosomal subunit protein uL24 (121 aa).

Belongs to the universal ribosomal protein uL24 family. In terms of assembly, part of the 50S ribosomal subunit.

One of two assembly initiator proteins, it binds directly to the 5'-end of the 23S rRNA, where it nucleates assembly of the 50S subunit. In terms of biological role, located at the polypeptide exit tunnel on the outside of the subunit. This chain is Large ribosomal subunit protein uL24, found in Thermococcus kodakarensis (strain ATCC BAA-918 / JCM 12380 / KOD1) (Pyrococcus kodakaraensis (strain KOD1)).